The primary structure comprises 257 residues: Imidazole glycerol phosphate synthase subunit HisF (257 aa).

Catalysis depends on residues aspartate 12 and aspartate 131.

It belongs to the HisA/HisF family. Heterodimer of HisH and HisF.

It localises to the cytoplasm. It catalyses the reaction 5-[(5-phospho-1-deoxy-D-ribulos-1-ylimino)methylamino]-1-(5-phospho-beta-D-ribosyl)imidazole-4-carboxamide + L-glutamine = D-erythro-1-(imidazol-4-yl)glycerol 3-phosphate + 5-amino-1-(5-phospho-beta-D-ribosyl)imidazole-4-carboxamide + L-glutamate + H(+). It functions in the pathway amino-acid biosynthesis; L-histidine biosynthesis; L-histidine from 5-phospho-alpha-D-ribose 1-diphosphate: step 5/9. IGPS catalyzes the conversion of PRFAR and glutamine to IGP, AICAR and glutamate. The HisF subunit catalyzes the cyclization activity that produces IGP and AICAR from PRFAR using the ammonia provided by the HisH subunit. This chain is Imidazole glycerol phosphate synthase subunit HisF, found in Burkholderia pseudomallei (strain 1106a).